Here is a 787-residue protein sequence, read N- to C-terminus: Disease resistance protein ADR1 (787 aa).

The RPW8 domain maps to 1 to 149 (MASFIDLFAG…LLTERNDSLS (149 aa)). Positions 96-112 (HANKMKDLEKQISRFLN) form a coiled coil. Residue 193-200 (GMSGSGKT) participates in ATP binding. Positions 247–414 (HQRKLVILDD…PLDLLTSVWV (168 aa)) constitute an NB-ARC domain. LRR repeat units follow at residues 549-575 (MSRL…IFAN), 576-599 (LAKL…TIPL), 650-674 (ITSL…LSNV), and 722-745 (LGSL…VAAL).

This sequence belongs to the disease resistance NB-LRR family.

Disease resistance (R) protein that mediates resistance against Hyaloperonospora parasitica in a salicylic acid-dependent manner. Also mediates resistance against Erysiphe cichoracearum is both salicylic acid-dependent and partially NPR1-dependent. Resistance proteins guard the plant against pathogens that contain an appropriate avirulence protein via an indirect interaction with this avirulence protein. That triggers a defense system including the hypersensitive response, which restricts the pathogen growth. This chain is Disease resistance protein ADR1 (ADR1), found in Arabidopsis thaliana (Mouse-ear cress).